A 95-amino-acid polypeptide reads, in one-letter code: Protein TusB (95 aa).

The protein belongs to the DsrH/TusB family. In terms of assembly, heterohexamer, formed by a dimer of trimers. The hexameric TusBCD complex contains 2 copies each of TusB, TusC and TusD. The TusBCD complex interacts with TusE.

The protein resides in the cytoplasm. Functionally, part of a sulfur-relay system required for 2-thiolation of 5-methylaminomethyl-2-thiouridine (mnm(5)s(2)U) at tRNA wobble positions. The sequence is that of Protein TusB from Buchnera aphidicola subsp. Baizongia pistaciae (strain Bp).